The following is a 260-amino-acid chain: Acidic leucine-rich nuclear phosphoprotein 32 family member E (260 aa).

Met-1 is subject to N-acetylmethionine. LRR repeat units follow at residues 18–38 (EVTE…EGLN), 43–64 (ELEF…PSLN), 65–87 (KLRK…AEKC), and 89–110 (NLTY…EALQ). A Glycyl lysine isopeptide (Lys-Gly) (interchain with G-Cter in SUMO2) cross-link involves residue Lys-68. The LRRCT domain occupies 123 to 161 (CEITNLEDYRESIFELLQQITYLDGFDQEDNEAPDSEEE). Acidic residues-rich tracts occupy residues 149 to 208 (DQED…EEEV) and 218 to 240 (IQDE…EEEE). A disordered region spans residues 149–260 (DQEDNEAPDS…AEDDGEEDDD (112 aa)). The ZID domain stretch occupies residues 207-260 (EVGLSYLMKDEIQDEEDDDDYVDEGEEEEEEEEEGLRGEKRKRDAEDDGEEDDD). Residues 241-251 (GLRGEKRKRDA) are compositionally biased toward basic and acidic residues.

The protein belongs to the ANP32 family. As to quaternary structure, component of a SWR1-like complex, composed of EP400, KAT5/TIP60, TRRAP, BRD8, RUVBL1, RUVBL2, ING3 and ANP32E; the complex does not contain SRCAP. Interacts with H2A.Z/H2AZ1. Interacts with the importin alpha KPNA1 and KPNA2. Post-translationally, phosphorylated. The phosphorylation is nuclear localization signal (NLS)-dependent. As to expression, expressed at highest levels in cerebellum and spleen. In the cerebellum, expressed mainly in granule cells and, to a lesser extent, in Purkinje cells.

It localises to the cytoplasm. The protein localises to the nucleus. In terms of biological role, histone chaperone that specifically mediates the genome-wide removal of histone H2A.Z/H2AZ1 from the nucleosome: removes H2A.Z/H2AZ1 from its normal sites of deposition, especially from enhancer and insulator regions. Not involved in deposition of H2A.Z/H2AZ1 in the nucleosome. May stabilize the evicted H2A.Z/H2AZ1-H2B dimer, thus shifting the equilibrium towards dissociation and the off-chromatin state. Inhibits activity of protein phosphatase 2A (PP2A). Does not inhibit protein phosphatase 1. May play a role in cerebellar development and synaptogenesis. The sequence is that of Acidic leucine-rich nuclear phosphoprotein 32 family member E (Anp32e) from Mus musculus (Mouse).